The sequence spans 510 residues: Fumarate hydratase, mitochondrial (510 aa).

The N-terminal 44 residues, 1–44 (MYRALWLLARSRRLVRPPASALASAPGLSGAAVPSFWPPNAARM), are a transit peptide targeting the mitochondrion. N6-acetyllysine; alternate is present on residues Lys61, Lys66, and Lys80. N6-succinyllysine; alternate is present on residues Lys61, Lys66, and Lys80. Thr85 and Thr90 each carry phosphothreonine. An N6-acetyllysine modification is found at Lys94. An N6-acetyllysine; alternate mark is found at Lys115 and Lys122. Residues Lys115 and Lys122 each carry the N6-succinyllysine; alternate modification. Substrate-binding positions include 145-147 (SGT), 176-179 (HPND), and 186-188 (SSN). Lys213 bears the N6-acetyllysine mark. Position 223 is an N6-acetyllysine; alternate (Lys223). Lys223 is modified (N6-succinyllysine; alternate). Residue Thr234 coordinates substrate. His235 (proton donor/acceptor) is an active-site residue. Thr236 carries the post-translational modification Phosphothreonine. Lys256 carries the post-translational modification N6-acetyllysine. Lys292 bears the N6-acetyllysine; alternate mark. At Lys292 the chain carries N6-succinyllysine; alternate. Ser365 is a catalytic residue. Substrate contacts are provided by residues Ser366 and 371–373 (KVN). Ser366 is modified (phosphoserine). N6-succinyllysine occurs at positions 467 and 473. Lys502 carries the post-translational modification N6-acetyllysine.

The protein belongs to the class-II fumarase/aspartase family. Fumarase subfamily. As to quaternary structure, homotetramer. Interacts with H2AZ1. Phosphorylation at Thr-236 by PRKDC in response to DNA damage promotes translocation to the nucleus and recruitment to DNA double-strand breaks (DSBs).

Its subcellular location is the mitochondrion. It localises to the cytoplasm. It is found in the cytosol. The protein localises to the nucleus. The protein resides in the chromosome. The enzyme catalyses (S)-malate = fumarate + H2O. It functions in the pathway carbohydrate metabolism; tricarboxylic acid cycle; (S)-malate from fumarate: step 1/1. Its function is as follows. Catalyzes the reversible stereospecific interconversion of fumarate to L-malate. Experiments in other species have demonstrated that specific isoforms of this protein act in defined pathways and favor one direction over the other. Functionally, catalyzes the hydration of fumarate to L-malate in the tricarboxylic acid (TCA) cycle to facilitate a transition step in the production of energy in the form of NADH. In terms of biological role, catalyzes the dehydration of L-malate to fumarate. Fumarate metabolism in the cytosol plays a role during urea cycle and arginine metabolism; fumarate being a by-product of the urea cycle and amino-acid catabolism. Also plays a role in DNA repair by promoting non-homologous end-joining (NHEJ). In response to DNA damage and phosphorylation by PRKDC, translocates to the nucleus and accumulates at DNA double-strand breaks (DSBs): acts by catalyzing formation of fumarate, an inhibitor of KDM2B histone demethylase activity, resulting in enhanced dimethylation of histone H3 'Lys-36' (H3K36me2). This Macaca fascicularis (Crab-eating macaque) protein is Fumarate hydratase, mitochondrial.